Here is a 951-residue protein sequence, read N- to C-terminus: MDEENMTKSEEQQPLSLQKALQQCELVQNMIDLSISNLEGLRTKCAASNDLTQKEIRTLESKLVKYFSRQLSCKKKVALQERNAELDGFPQLRHWFRIVDVRKEVLEEISPDQLSLEDLLEMTDEQVCETVEKYGANQEECARLNASLSCLRNVHKSGGNLSKQDWIIQWPTTEPGQESNPVCPPEPSPWIRTHLSQSPRVQTKCPQHFCPTSPTPGTPVYTQVDRLTVDAYPNLCPPPPPLESGHRSLPPSPRQRHVVRTPPRTPNIVTTVTPPGTPPMRRKNKLKPPGTPPPSSRKLIHLIPGFTALHRSKSHEFQLGNRVDEANTPKAKKKSKPLNLKIHSGVGSCENIPAQQRSPLLSERSLRSFFVGHGPFLPSTPPVHTEANFSANTLSVPRWSPQIPRRDLGNSIKHRFSTKYWMSQTCTVCGKGMLFGLKCKNCKLKCHNKCTKEAPPCHLLIIHRGDPARLVRTESVPCDINNPVRKPARYSDLHISQTLPKTNKINKDHIPVPYQPDSSSNPSSTTSSTPSSPAPPLPPSATPPSPLHPSPQCPRQKKNFNLPASHYYKYKQQFIFPDVVPVPETPTRAPQVILHPVTSNTILEGNPLLQIEVEPTSENEESHNEAEESEDEFEEMNLSLLSARSFPRKASQTSIFLQEWDIPFEQLEIGELIGKGRFGQVYHGRWHGEVAIRLIDIERDNEDQLKAFKREVMAYRQTRHENVVLFMGACMSPPHLAIITSLCKGRTLYSVVRDAKIVLDVNKTRQIAQEIVKGMGYLHAKGILHKDLKSKNVFYDNGKVVITDFGLFSISGVLQAGRRDDKLRIQNGWLCHLAPEIIRQLSPDTEEDKLPFSKHSDVFALGTIWYELHAREWPFKTQPAEAIIWQMGTGMKPNLSQIGMGKEISDILLFCWAFEQEERPTFTKLMDMLEKLPKRNRRLSHPGHFWKSAEL.

The disordered stretch occupies residues 237-298; it reads PPPPPLESGH…PGTPPPSSRK (62 aa). A compositionally biased stretch (low complexity) spans 260-274; that stretch reads RTPPRTPNIVTTVTP. Phosphothreonine is present on residues Thr-273 and Thr-277. The Phorbol-ester/DAG-type zinc-finger motif lies at 413 to 457; it reads KHRFSTKYWMSQTCTVCGKGMLFGLKCKNCKLKCHNKCTKEAPPC. Zn(2+) contacts are provided by His-414, Cys-426, Cys-429, Cys-439, Cys-442, His-447, Cys-450, and Cys-457. Ser-475 carries the phosphoserine; by MARK3 modification. Disordered regions lie at residues 489–559 and 614–634; these read RYSD…QKKN and EPTS…DEFE. The segment covering 494–503 has biased composition (polar residues); it reads HISQTLPKTN. At Thr-498 the chain carries Phosphothreonine. Over residues 518–531 the composition is skewed to low complexity; it reads SSSNPSSTTSSTPS. The span at 532–552 shows a compositional bias: pro residues; the sequence is SPAPPLPPSATPPSPLHPSPQ. Positions 667 to 932 constitute a Protein kinase domain; it reads LEIGELIGKG…TKLMDMLEKL (266 aa). ATP is bound at residue 673-681; the sequence is IGKGRFGQV. Asp-787 acts as the Proton donor/acceptor in catalysis. Positions 789 and 804 each coordinate ATP.

It belongs to the protein kinase superfamily. TKL Ser/Thr protein kinase family. In terms of assembly, heterodimerizes (via N-terminus) with BRAF (via N-terminus) in a MAP2K1/MEK1-dependent manner. Interacts with BRAF; this increases the low intrinsic protein kinase activity of KSR2. Interacts with MAP2K1, forming a heterodimer that can dimerize to form a heterotetramer. Interacts with MAP3K8, MAPK, RAS and RAF. Phosphorylated on Ser-475 by MARK3.

It is found in the cytoplasm. The protein resides in the membrane. It carries out the reaction L-seryl-[protein] + ATP = O-phospho-L-seryl-[protein] + ADP + H(+). The catalysed reaction is L-threonyl-[protein] + ATP = O-phospho-L-threonyl-[protein] + ADP + H(+). Functionally, location-regulated scaffold connecting MEK to RAF. Has very low protein kinase activity and can phosphorylate MAP2K1 at several Ser and Thr residues with very low efficiency (in vitro). Acts as MAP2K1/MEK1-dependent allosteric activator of BRAF; upon binding to MAP2K1/MEK1, dimerizes with BRAF and promotes BRAF-mediated phosphorylation of MAP2K1/MEK1. Interaction with BRAF enhances KSR2-mediated phosphorylation of MAP2K1 (in vitro). Blocks MAP3K8 kinase activity and MAP3K8-mediated signaling. Acts as a negative regulator of MAP3K3-mediated activation of ERK, JNK and NF-kappa-B pathways, inhibiting MAP3K3-mediated interleukin-8 production. This chain is Kinase suppressor of Ras 2, found in Mus musculus (Mouse).